The chain runs to 178 residues: ATP synthase subunit delta (178 aa).

It belongs to the ATPase delta chain family. As to quaternary structure, F-type ATPases have 2 components, F(1) - the catalytic core - and F(0) - the membrane proton channel. F(1) has five subunits: alpha(3), beta(3), gamma(1), delta(1), epsilon(1). F(0) has three main subunits: a(1), b(2) and c(10-14). The alpha and beta chains form an alternating ring which encloses part of the gamma chain. F(1) is attached to F(0) by a central stalk formed by the gamma and epsilon chains, while a peripheral stalk is formed by the delta and b chains.

The protein localises to the cell inner membrane. Its function is as follows. F(1)F(0) ATP synthase produces ATP from ADP in the presence of a proton or sodium gradient. F-type ATPases consist of two structural domains, F(1) containing the extramembraneous catalytic core and F(0) containing the membrane proton channel, linked together by a central stalk and a peripheral stalk. During catalysis, ATP synthesis in the catalytic domain of F(1) is coupled via a rotary mechanism of the central stalk subunits to proton translocation. This protein is part of the stalk that links CF(0) to CF(1). It either transmits conformational changes from CF(0) to CF(1) or is implicated in proton conduction. This is ATP synthase subunit delta from Pseudomonas putida (strain W619).